The primary structure comprises 170 residues: UPF0690 protein C1orf52 homolog (170 aa).

Disordered regions lie at residues 1–56 (MAAE…PDEL) and 124–170 (SNVY…KRKV). Over residues 46 to 56 (DTKKLPGPDEL) the composition is skewed to basic and acidic residues. Over residues 144-159 (EEEEAREDSPPSDDEQ) the composition is skewed to acidic residues.

Belongs to the UPF0690 family.

This is UPF0690 protein C1orf52 homolog from Xenopus tropicalis (Western clawed frog).